A 748-amino-acid polypeptide reads, in one-letter code: Elongation factor G, mitochondrial (748 aa).

The transit peptide at 1–14 (MTISSFLRVRHSLA) directs the protein to the mitochondrion. Residues 40–318 (ERIRNIGISA…VLNYLPHPGE (279 aa)) enclose the tr-type G domain. Residues 49-56 (AHIDSGKT), 116-120 (DTPGH), and 170-173 (NKLD) contribute to the GTP site.

It belongs to the TRAFAC class translation factor GTPase superfamily. Classic translation factor GTPase family. EF-G/EF-2 subfamily.

The protein localises to the mitochondrion. Its pathway is protein biosynthesis; polypeptide chain elongation. In terms of biological role, mitochondrial GTPase that catalyzes the GTP-dependent ribosomal translocation step during translation elongation. During this step, the ribosome changes from the pre-translocational (PRE) to the post-translocational (POST) state as the newly formed A-site-bound peptidyl-tRNA and P-site-bound deacylated tRNA move to the P and E sites, respectively. Catalyzes the coordinated movement of the two tRNA molecules, the mRNA and conformational changes in the ribosome. This is Elongation factor G, mitochondrial from Aedes aegypti (Yellowfever mosquito).